A 119-amino-acid chain; its full sequence is EF-hand calcium-binding domain-containing protein 2 (119 aa).

A signal peptide spans 1–22 (MKVAVVLIVVLVVMMIGQETDS). One can recognise an EF-hand domain in the interval 82–117 (VDDNGFVEFKATYDVDGDGVVQVEEYETVVELTENL). 4 residues coordinate Ca(2+): Asp-95, Asp-97, Asp-99, and Glu-106.

Component of the acid-soluble organic matrix of calcified layers of the shell (at protein level).

The protein resides in the secreted. The polypeptide is EF-hand calcium-binding domain-containing protein 2 (Lottia gigantea (Giant owl limpet)).